The chain runs to 185 residues: Photosystem I assembly protein Ycf4 (185 aa).

The next 2 membrane-spanning stretches (helical) occupy residues 21 to 43 (NFFW…ISSY) and 68 to 90 (FYGI…NVGS).

This sequence belongs to the Ycf4 family.

Its subcellular location is the plastid. It is found in the chloroplast thylakoid membrane. Its function is as follows. Seems to be required for the assembly of the photosystem I complex. The sequence is that of Photosystem I assembly protein Ycf4 from Aegilops tauschii (Tausch's goatgrass).